We begin with the raw amino-acid sequence, 314 residues long: Inactive protein FRIGIDA (314 aa).

Over residues 1-18 (MSNYPPTVAAQPTTTANP) the composition is skewed to low complexity. A disordered region spans residues 1 to 31 (MSNYPPTVAAQPTTTANPLLQRHQSEQRRRE). The stretch at 67-97 (VAVETFKRQFDDLQKHIESIENAIDSKLESN) forms a coiled coil.

The protein belongs to the Frigida family.

The protein resides in the nucleus. The chain is Inactive protein FRIGIDA (FRI) from Arabidopsis thaliana (Mouse-ear cress).